A 227-amino-acid polypeptide reads, in one-letter code: Orotidine 5'-phosphate decarboxylase (227 aa).

Residues Asp-8, Lys-30, Asp-57–Thr-66, Thr-116, Arg-177, Gln-186, Gly-206, and Arg-207 contribute to the substrate site. Lys-59 serves as the catalytic Proton donor.

The protein belongs to the OMP decarboxylase family. Type 1 subfamily. Homodimer.

The enzyme catalyses orotidine 5'-phosphate + H(+) = UMP + CO2. The protein operates within pyrimidine metabolism; UMP biosynthesis via de novo pathway; UMP from orotate: step 2/2. Catalyzes the decarboxylation of orotidine 5'-monophosphate (OMP) to uridine 5'-monophosphate (UMP). This is Orotidine 5'-phosphate decarboxylase from Acinetobacter baumannii (strain AB307-0294).